A 213-amino-acid chain; its full sequence is ATP-dependent dethiobiotin synthetase BioD 2 (213 aa).

13 to 18 (DIGKTI) contributes to the ATP binding site. Position 17 (T17) interacts with Mg(2+). K38 is a catalytic residue. T42 lines the substrate pocket. Residues D50 and 115–118 (EGAG) contribute to the ATP site. D50 and E115 together coordinate Mg(2+).

The protein belongs to the dethiobiotin synthetase family. As to quaternary structure, homodimer. It depends on Mg(2+) as a cofactor.

It is found in the cytoplasm. It catalyses the reaction (7R,8S)-7,8-diammoniononanoate + CO2 + ATP = (4R,5S)-dethiobiotin + ADP + phosphate + 3 H(+). Its pathway is cofactor biosynthesis; biotin biosynthesis; biotin from 7,8-diaminononanoate: step 1/2. Its function is as follows. Catalyzes a mechanistically unusual reaction, the ATP-dependent insertion of CO2 between the N7 and N8 nitrogen atoms of 7,8-diaminopelargonic acid (DAPA, also called 7,8-diammoniononanoate) to form a ureido ring. The protein is ATP-dependent dethiobiotin synthetase BioD 2 of Pasteurella multocida (strain Pm70).